Reading from the N-terminus, the 184-residue chain is NADH-quinone oxidoreductase subunit B (184 aa).

4 residues coordinate [4Fe-4S] cluster: cysteine 63, cysteine 64, cysteine 128, and cysteine 158.

The protein belongs to the complex I 20 kDa subunit family. NDH-1 is composed of 14 different subunits. Subunits NuoB, C, D, E, F, and G constitute the peripheral sector of the complex. It depends on [4Fe-4S] cluster as a cofactor.

It localises to the cell inner membrane. The catalysed reaction is a quinone + NADH + 5 H(+)(in) = a quinol + NAD(+) + 4 H(+)(out). NDH-1 shuttles electrons from NADH, via FMN and iron-sulfur (Fe-S) centers, to quinones in the respiratory chain. The immediate electron acceptor for the enzyme in this species is believed to be ubiquinone. Couples the redox reaction to proton translocation (for every two electrons transferred, four hydrogen ions are translocated across the cytoplasmic membrane), and thus conserves the redox energy in a proton gradient. The sequence is that of NADH-quinone oxidoreductase subunit B from Xylella fastidiosa (strain M12).